The sequence spans 421 residues: Subtilisin-like protease 2 (421 aa).

A signal peptide spans 1–16 (MQLLNFGLLLLPFVAG). The propeptide occupies 17-122 (DLAPQPEPLL…VHPDQHVYLA (106 aa)). The Inhibitor I9 domain occupies 36-122 (QYIVTLKEGL…VHPDQHVYLA (87 aa)). In terms of domain architecture, Peptidase S8 spans 131 to 421 (RWGLGYMSSK…ERKFTLPKYF (291 aa)). Residues Asp-169 and His-201 each act as charge relay system in the active site. N-linked (GlcNAc...) asparagine glycosylation is found at Asn-248, Asn-261, and Asn-348. The active-site Charge relay system is Ser-357. Residue Asn-388 is glycosylated (N-linked (GlcNAc...) asparagine).

The protein belongs to the peptidase S8 family.

Its subcellular location is the secreted. Functionally, secreted subtilisin-like serine protease with keratinolytic activity that contributes to pathogenicity. The polypeptide is Subtilisin-like protease 2 (SUB2) (Trichophyton tonsurans (Scalp ringworm fungus)).